The sequence spans 290 residues: ATP synthase gamma chain (290 aa).

The protein belongs to the ATPase gamma chain family. F-type ATPases have 2 components, CF(1) - the catalytic core - and CF(0) - the membrane proton channel. CF(1) has five subunits: alpha(3), beta(3), gamma(1), delta(1), epsilon(1). CF(0) has four main subunits: a, b, b' and c.

The protein resides in the cellular chromatophore membrane. Produces ATP from ADP in the presence of a proton gradient across the membrane. The gamma chain is believed to be important in regulating ATPase activity and the flow of protons through the CF(0) complex. The chain is ATP synthase gamma chain from Rhodobacter capsulatus (Rhodopseudomonas capsulata).